A 310-amino-acid chain; its full sequence is Protein BIG GRAIN 1 (310 aa).

Residues 81 to 141 are disordered; it reads RAPGPHATTS…KKAKKPGASI (61 aa). A compositionally biased stretch (low complexity) spans 90 to 106; sequence SSSSECSSYGGFSSSEA.

Belongs to the BIG GRAIN 1 (BG1) plant protein family.

The protein localises to the cell membrane. In terms of biological role, involved in auxin transport. Positive regulator of the auxin signaling pathway involved in gravitropism, plant growth and grain development. This chain is Protein BIG GRAIN 1, found in Oryza sativa subsp. indica (Rice).